We begin with the raw amino-acid sequence, 239 residues long: MTQQIKYKRVLLKLSGESLMGSDPFGINHDTIVQTVGEIAEIVKMGVQVGIVVGGGNIFRGVSAQAGSMDRATADYMGMMATVMNALALKDAFETLGIKARVQSALSMQQIAETYARPKAIQYLEEGKVVIFAAGTGNPFFTTDTAAALRGAEMNCDVMLKATNVDGVYTADPKKDPSATRYETITFDEALNKNLKVMDATAFALCRERKLNIVVFGIAKQGSLKRVITGEDEGTLVHC.

13-16 (KLSG) provides a ligand contact to ATP. G55 is a UMP binding site. ATP contacts are provided by G56 and R60. Residues D75 and 136–143 (TGNPFFTT) each bind UMP. T163, N164, Y169, and D172 together coordinate ATP.

This sequence belongs to the UMP kinase family. Homohexamer.

Its subcellular location is the cytoplasm. The enzyme catalyses UMP + ATP = UDP + ADP. Its pathway is pyrimidine metabolism; CTP biosynthesis via de novo pathway; UDP from UMP (UMPK route): step 1/1. Inhibited by UTP. Functionally, catalyzes the reversible phosphorylation of UMP to UDP. The chain is Uridylate kinase from Neisseria gonorrhoeae (strain ATCC 700825 / FA 1090).